A 155-amino-acid polypeptide reads, in one-letter code: SsrA-binding protein (155 aa).

The segment at 135 to 155 is disordered; that stretch reads KRESLKRRQDQRDIQRAMKNY.

The protein belongs to the SmpB family.

It localises to the cytoplasm. Required for rescue of stalled ribosomes mediated by trans-translation. Binds to transfer-messenger RNA (tmRNA), required for stable association of tmRNA with ribosomes. tmRNA and SmpB together mimic tRNA shape, replacing the anticodon stem-loop with SmpB. tmRNA is encoded by the ssrA gene; the 2 termini fold to resemble tRNA(Ala) and it encodes a 'tag peptide', a short internal open reading frame. During trans-translation Ala-aminoacylated tmRNA acts like a tRNA, entering the A-site of stalled ribosomes, displacing the stalled mRNA. The ribosome then switches to translate the ORF on the tmRNA; the nascent peptide is terminated with the 'tag peptide' encoded by the tmRNA and targeted for degradation. The ribosome is freed to recommence translation, which seems to be the essential function of trans-translation. This is SsrA-binding protein from Trichormus variabilis (strain ATCC 29413 / PCC 7937) (Anabaena variabilis).